The sequence spans 124 residues: Large ribosomal subunit protein uL22 (124 aa).

Belongs to the universal ribosomal protein uL22 family. As to quaternary structure, part of the 50S ribosomal subunit.

In terms of biological role, this protein binds specifically to 23S rRNA; its binding is stimulated by other ribosomal proteins, e.g. L4, L17, and L20. It is important during the early stages of 50S assembly. It makes multiple contacts with different domains of the 23S rRNA in the assembled 50S subunit and ribosome. The globular domain of the protein is located near the polypeptide exit tunnel on the outside of the subunit, while an extended beta-hairpin is found that lines the wall of the exit tunnel in the center of the 70S ribosome. The sequence is that of Large ribosomal subunit protein uL22 from Macrococcus caseolyticus (strain JCSC5402) (Macrococcoides caseolyticum).